Reading from the N-terminus, the 130-residue chain is Sec-independent protein translocase protein TatB (130 aa).

A helical transmembrane segment spans residues 1-21; that stretch reads MFDISFTELIVIGIVALVVIG. The tract at residues 70 to 130 is disordered; the sequence is VDSFQNSVHS…TPKEPRQSGS (61 aa). 2 stretches are compositionally biased toward basic and acidic residues: residues 80-89 and 96-111; these read EINKIQETAD and PEKE…KTEP.

It belongs to the TatB family. As to quaternary structure, the Tat system comprises two distinct complexes: a TatABC complex, containing multiple copies of TatA, TatB and TatC subunits, and a separate TatA complex, containing only TatA subunits. Substrates initially bind to the TatABC complex, which probably triggers association of the separate TatA complex to form the active translocon.

The protein resides in the cell inner membrane. Its function is as follows. Part of the twin-arginine translocation (Tat) system that transports large folded proteins containing a characteristic twin-arginine motif in their signal peptide across membranes. Together with TatC, TatB is part of a receptor directly interacting with Tat signal peptides. TatB may form an oligomeric binding site that transiently accommodates folded Tat precursor proteins before their translocation. This is Sec-independent protein translocase protein TatB from Nitrosomonas eutropha (strain DSM 101675 / C91 / Nm57).